We begin with the raw amino-acid sequence, 348 residues long: Olfactory receptor 2T4 (348 aa).

Residues 1-57 (MDNITWMASHTGWSDFILMGLFRQSKHPMANITWMANHTGWSDFILLGLFRQSKHPA) are Extracellular-facing. Asn31 and Asn37 each carry an N-linked (GlcNAc...) asparagine glycan. The chain crosses the membrane as a helical span at residues 58–81 (LLCVVIFVVFLMALSGNAVLILLI). The Cytoplasmic portion of the chain corresponds to 82–89 (HCDAHLHT). A helical transmembrane segment spans residues 90-111 (PMYFFISQLSLMDMAYISVTVP). The Extracellular portion of the chain corresponds to 112–132 (KMLLDQVMGVNKISAPECGMQ). Cysteines 129 and 221 form a disulfide. Residues 133 to 152 (MFFYVTLAGSEFFLLATMAY) form a helical membrane-spanning segment. Topologically, residues 153–171 (DRYVAICHPLRYPVLMNHR) are cytoplasmic. Residues 172-190 (VCLFLSSGCWFLGSVDGFT) form a helical membrane-spanning segment. The Extracellular portion of the chain corresponds to 191–227 (FTPITMTFPFRGSREIHHFFCEVPAVLNLSCSDTSLY). Residue Asn218 is glycosylated (N-linked (GlcNAc...) asparagine). A helical membrane pass occupies residues 228–251 (EIFMYLCCVLMLLIPVVIISSSYL). The Cytoplasmic segment spans residues 252–268 (LILLTIHGMNSAEGRKK). A helical transmembrane segment spans residues 269–291 (AFATCSSHLTVVILFYGAAIYTY). The Extracellular segment spans residues 292 to 304 (MLPSSYHTPEKDM). Residues 305-324 (MVSVFYTILTPVVNPLIYSL) form a helical membrane-spanning segment. At 325 to 348 (RNKDVMGALKKMLTVEPAFQKAME) the chain is on the cytoplasmic side.

Belongs to the G-protein coupled receptor 1 family.

Its subcellular location is the cell membrane. Odorant receptor. The sequence is that of Olfactory receptor 2T4 (OR2T4) from Homo sapiens (Human).